The chain runs to 134 residues: MSNTETANPTAKAVAKHVRVTPMKARRVVDLVRGRSVEDALNILKFAPQAASEPVAKVIASAAANAENNLDLDPSTLVVATAFVDEGATLKRFQPRAQGRAFRIRKRTSHITVIVESLPKTGTSTRNRRKGSAQ.

It belongs to the universal ribosomal protein uL22 family. In terms of assembly, part of the 50S ribosomal subunit.

In terms of biological role, this protein binds specifically to 23S rRNA; its binding is stimulated by other ribosomal proteins, e.g. L4, L17, and L20. It is important during the early stages of 50S assembly. It makes multiple contacts with different domains of the 23S rRNA in the assembled 50S subunit and ribosome. Functionally, the globular domain of the protein is located near the polypeptide exit tunnel on the outside of the subunit, while an extended beta-hairpin is found that lines the wall of the exit tunnel in the center of the 70S ribosome. The polypeptide is Large ribosomal subunit protein uL22 (Rhodococcus erythropolis (strain PR4 / NBRC 100887)).